Here is a 161-residue protein sequence, read N- to C-terminus: Cyclic pyranopterin monophosphate synthase (161 aa).

Residues 75–77 and 115–116 each bind substrate; these read MCH and ME. Asp130 is an active-site residue.

This sequence belongs to the MoaC family. Homohexamer; trimer of dimers.

The enzyme catalyses (8S)-3',8-cyclo-7,8-dihydroguanosine 5'-triphosphate = cyclic pyranopterin phosphate + diphosphate. It functions in the pathway cofactor biosynthesis; molybdopterin biosynthesis. Functionally, catalyzes the conversion of (8S)-3',8-cyclo-7,8-dihydroguanosine 5'-triphosphate to cyclic pyranopterin monophosphate (cPMP). The protein is Cyclic pyranopterin monophosphate synthase of Bacillus cereus (strain G9842).